Consider the following 278-residue polypeptide: Polyamine aminopropyltransferase (278 aa).

The region spanning E3–N240 is the PABS domain. Q33 contacts S-methyl-5'-thioadenosine. Spermidine-binding residues include H64 and D88. Residues E108 and D139–G140 each bind S-methyl-5'-thioadenosine. The active-site Proton acceptor is the D158. A spermidine-binding site is contributed by D158 to D161. P165 is an S-methyl-5'-thioadenosine binding site.

The protein belongs to the spermidine/spermine synthase family. In terms of assembly, homodimer or homotetramer.

It localises to the cytoplasm. The catalysed reaction is S-adenosyl 3-(methylsulfanyl)propylamine + putrescine = S-methyl-5'-thioadenosine + spermidine + H(+). Its pathway is amine and polyamine biosynthesis; spermidine biosynthesis; spermidine from putrescine: step 1/1. Functionally, catalyzes the irreversible transfer of a propylamine group from the amino donor S-adenosylmethioninamine (decarboxy-AdoMet) to putrescine (1,4-diaminobutane) to yield spermidine. This Halorhodospira halophila (strain DSM 244 / SL1) (Ectothiorhodospira halophila (strain DSM 244 / SL1)) protein is Polyamine aminopropyltransferase.